The chain runs to 473 residues: Photosystem II CP43 reaction center protein (473 aa).

The propeptide occupies 1–14; it reads MKTLYSLRRFSHVE. At Thr-15 the chain carries N-acetylthreonine. Thr-15 bears the Phosphothreonine mark. A run of 5 helical transmembrane segments spans residues 69–93, 134–155, 178–200, 255–275, and 291–312; these read LFEV…PHLA, LLGP…KDRN, KALY…RKIT, KPFA…LSYS, and WFNN…ASQA. Glu-367 is a binding site for [CaMn4O5] cluster. The helical transmembrane segment at 447–471 threads the bilayer; the sequence is RARAAAAGFEKGIDRDFEPVLSMTP.

Belongs to the PsbB/PsbC family. PsbC subfamily. As to quaternary structure, PSII is composed of 1 copy each of membrane proteins PsbA, PsbB, PsbC, PsbD, PsbE, PsbF, PsbH, PsbI, PsbJ, PsbK, PsbL, PsbM, PsbT, PsbX, PsbY, PsbZ, Psb30/Ycf12, at least 3 peripheral proteins of the oxygen-evolving complex and a large number of cofactors. It forms dimeric complexes. Binds multiple chlorophylls and provides some of the ligands for the Ca-4Mn-5O cluster of the oxygen-evolving complex. It may also provide a ligand for a Cl- that is required for oxygen evolution. PSII binds additional chlorophylls, carotenoids and specific lipids. is required as a cofactor.

It localises to the plastid membrane. One of the components of the core complex of photosystem II (PSII). It binds chlorophyll and helps catalyze the primary light-induced photochemical processes of PSII. PSII is a light-driven water:plastoquinone oxidoreductase, using light energy to abstract electrons from H(2)O, generating O(2) and a proton gradient subsequently used for ATP formation. The polypeptide is Photosystem II CP43 reaction center protein (Cuscuta gronovii (Common dodder)).